Here is a 751-residue protein sequence, read N- to C-terminus: MSGSGRKDFDVKHILRLRWKLFSHPSPASSSPAGGSCLQQDSGGGSFEHWGPSQSRLLKNQEKGSVSAFWKKPSSSSSSSSSSSSSASSSPFNPLNGTLLPVATRLQQGAPGQGTQQPARTLFYVESLEEEVVTGMDFSGPEDKGLALKELQAEPASSIQATGEGCGHRLTSTNHSLTPQSDLDSSSSEEFYQAVHHAEQSFRKMENYLKQQQLCDVILIVGNRKIPAHRLVLSSVSDYFAAMFTSDVCEAKQEEIKMEGIDPNALWDLVQFAYTGCLELKEDTIENLLAAACLLQLPQVVEVCCHFLMKLLHPSNCLGIRAFADAQGCIELMKVAHSYTMENIMEVIRNQEFLLLPAEELHKLLASDDVNVPDEETIFHALMMWVKYDMQRRCSDLSMLLAFIRLPLLPPQILADLENHALFKNDLECQKLILEAMKYHLLPERRTLMQSPRTKPRKSTVGTLYAVGGMDNNKGATTIEKYDLRTNLWIQAGMMNGRRLQFGVAVIDDKLFVIGGRDGLKTLNTVECYNPKTKTWTVLPPMSTHRHGLGVTVLEGPIYAVGGHDGWSYLNTVERWDPQSQQWTYVASMSIARSTVGVAALNGKLYSVGGRDGSSCLSSMEYYDPHTNKWSMCAPMCKRRGGVGVATCDGFLYAVGGHDAPASNHCSRLLDYVERYDPKTDTWTMVAPLSMPRDAVGVCLLGDRLYAVGGYDGQTYLNTMESYDPQTNEWTQMASLNIGRAGACVVVIKQP.

2 stretches are compositionally biased toward low complexity: residues 25–36 (PSPASSSPAGGS) and 74–90 (SSSS…ASSS). 3 disordered regions span residues 25–54 (PSPA…GPSQ), 69–98 (FWKK…LNGT), and 157–184 (SSIQ…SDLD). Residues 170–184 (LTSTNHSLTPQSDLD) show a composition bias toward polar residues. A BTB domain is found at 215-282 (CDVILIVGNR…AYTGCLELKE (68 aa)). 6 Kelch repeats span residues 463–509 (TLYA…VIDD), 510–556 (KLFV…VLEG), 558–603 (IYAV…ALNG), 604–650 (KLYS…TCDG), 652–703 (LYAV…LLGD), and 704–750 (RLYA…VIKQ).

Highly expressed in brain.

Its subcellular location is the cytoplasm. It is found in the cytoskeleton. Its function is as follows. May play a role in organizing the actin cytoskeleton of the brain cells. This Mus musculus (Mouse) protein is Kelch-like protein 1 (Klhl1).